We begin with the raw amino-acid sequence, 246 residues long: uncharacterized protein (246 aa).

The stretch at 204–243 (TTKLKKLEKEIHELPYMLINGKITYEEYKKRIREIEKEIG) forms a coiled coil.

This is an uncharacterized protein from Aquifex aeolicus (strain VF5).